The chain runs to 477 residues: Cysteine--tRNA ligase (477 aa).

A Zn(2+)-binding site is contributed by Cys29. The 'HIGH' region signature appears at Pro31–Asn41. Residues Cys209, His234, and Glu238 each contribute to the Zn(2+) site. Positions Lys267–Ser271 match the 'KMSKS' region motif. Lys270 is a binding site for ATP.

It belongs to the class-I aminoacyl-tRNA synthetase family. In terms of assembly, monomer. Zn(2+) serves as cofactor.

It localises to the cytoplasm. It carries out the reaction tRNA(Cys) + L-cysteine + ATP = L-cysteinyl-tRNA(Cys) + AMP + diphosphate. The polypeptide is Cysteine--tRNA ligase (Desulfitobacterium hafniense (strain DSM 10664 / DCB-2)).